We begin with the raw amino-acid sequence, 198 residues long: Recombination protein RecR (198 aa).

A C4-type zinc finger spans residues 57–72; sequence CEKCNTFTEAQICEVC. One can recognise a Toprim domain in the interval 80 to 175; the sequence is TLLCVVETPA…SVTRLARGVP (96 aa).

The protein belongs to the RecR family.

Functionally, may play a role in DNA repair. It seems to be involved in an RecBC-independent recombinational process of DNA repair. It may act with RecF and RecO. The protein is Recombination protein RecR of Paraburkholderia phymatum (strain DSM 17167 / CIP 108236 / LMG 21445 / STM815) (Burkholderia phymatum).